Reading from the N-terminus, the 483-residue chain is MASSVSLQFLTNTFISKPQGFCNGIVSAPRPRSNLLRDRQNGVRPIKVASIETQPFPLFQSPASEESSSSELETADPDFYKIGYVRSVRAYGVEFKEGPDGFGVYASKDIEPRRRARVIMEIPLELMITIRQKHPWMFFPDIVPIGHPIFDIINSTDPEIDWDIRLACLLLFSFDRDDHFWRLYGDFLPAADECSSLLLATEEDLAELQDPDLVSTIRQQQKRILDFWEKNWHSGVPLKIKRLAEDPERFIWAVSMAQTRCISMQTRVGALVQELNMMIPYADMLNHSFEPNCFLHWRPKDRMLEVMSNAGQDIKKGEEMTINYMPGQKNNMLMERYGFSTPVNPWDAIKFSGDSRIHLNSFLSVFNIYGLPEEYYHDSELSRGDTFVDGAVIAAARTLPTWSDIDLPPIPSAERKAVKELQDECRKMLAEYPTTAEQDQKLLDSMSEARTTFATAVKYRMHRKMFIGKIIKALDIYQERLLY.

Residues 1–62 constitute a chloroplast transit peptide; sequence MASSVSLQFL…TQPFPLFQSP (62 aa). An SET domain is found at 80–325; sequence YKIGYVRSVR…KGEEMTINYM (246 aa). Residue tyrosine 324 coordinates S-adenosyl-L-methionine.

This sequence belongs to the class V-like SAM-binding methyltransferase superfamily. In terms of assembly, component of the transcriptionally active chromosome (TAC) complexes. Interacts with PTAC12/HMR/PAP5 and PTAC7. Binds to SL1/MTERF3. In terms of tissue distribution, mostly expressed in leaves, flowers and seedlings, and, to a lower extent, in stems and roots.

Its subcellular location is the plastid. It localises to the chloroplast thylakoid. Essential for chloroplast development, especially for thylakoid formation. Involved in plastid gene expression, probably by maintaining plastid-encoded RNA polymerase (PEP) activity. This Arabidopsis thaliana (Mouse-ear cress) protein is Protein PLASTID TRANSCRIPTIONALLY ACTIVE 14.